Here is a 74-residue protein sequence, read N- to C-terminus: Protein A30 homolog (74 aa).

It belongs to the chordopoxvirinae A30 family. As to quaternary structure, interacts with protein G7; the interaction stabilizes both proteins. Phosphorylated by viral F10 kinase.

Functionally, required for the association between the dense viroplasm and the viral membranes to form the mature virion (MV). The chain is Protein A30 homolog from Fowlpox virus (strain NVSL) (FPV).